Here is a 1918-residue protein sequence, read N- to C-terminus: NFX1-type zinc finger-containing protein 1 (1918 aa).

A compositionally biased stretch (basic and acidic residues) spans 1 to 12 (MEERRPHLDARP). Disordered stretches follow at residues 1 to 58 (MEER…RANN) and 75 to 140 (RNPH…QPQQ). Residues 30 to 42 (RARNQANNPPANA) are compositionally biased toward low complexity. A compositionally biased stretch (basic and acidic residues) spans 82–105 (RNQEGHASDEARDQRHDQENDTRW). Residues 120 to 129 (SNDNFQQWRT) are compositionally biased toward polar residues. The stretch at 286–313 (DIEEETEKNLEKVQTIIEHLQEKRREGT) forms a coiled coil. 2 disordered regions span residues 796 to 819 (SVSP…GEEE) and 876 to 896 (TAAG…QKKK). A compositionally biased stretch (acidic residues) spans 809–819 (EGDEEEEGEEE). A compositionally biased stretch (polar residues) spans 877 to 887 (AAGQEQATGEW). Residues 886 to 967 (EWQTQRNQKK…TSAERMAELR (82 aa)) are a coiled coil. 6 consecutive NF-X1-type zinc fingers follow at residues 1298–1320 (CGHV…QCMK), 1330–1346 (GHRC…PCQV), 1382–1400 (CGHR…LCSE), 1441–1463 (CGHP…RCQQ), 1471–1488 (CSHK…PCQR), and 1546–1564 (CGHP…KCRI). Positions 1741–1820 (LAKKRLSFTS…EKMEALKATL (80 aa)) form a coiled coil. An RZ-type zinc finger spans residues 1827 to 1898 (ISEEERVQIV…LASEMDGAQH (72 aa)). Zn(2+)-binding residues include cysteine 1849, histidine 1853, cysteine 1869, and cysteine 1872.

Belongs to the ZNFX1 family. Interacts with MAVS. As to expression, widely expressed.

It is found in the mitochondrion outer membrane. The protein resides in the cytoplasm. The protein localises to the stress granule. Functionally, RNA-binding protein that initiates the antiviral response and is required to restrict the replication of RNA viruses. Acts as a double-stranded RNA (dsRNA) sensor that recognizes viral RNA and then interacts with MAVS to initiate the type I interferon response. Also required for immunity against some bacteria, such as mycobacteria. The sequence is that of NFX1-type zinc finger-containing protein 1 from Homo sapiens (Human).